The sequence spans 120 residues: UPF0344 protein lin2366 (120 aa).

Transmembrane regions (helical) follow at residues 3–23 (GYVH…ALLI), 33–53 (MLQM…IMMV), 62–82 (ILAI…EMLL), and 92–112 (GMFL…GFYL).

Belongs to the UPF0344 family.

The protein resides in the cell membrane. The protein is UPF0344 protein lin2366 of Listeria innocua serovar 6a (strain ATCC BAA-680 / CLIP 11262).